The sequence spans 276 residues: Undecaprenyl-diphosphatase (276 aa).

6 consecutive transmembrane segments (helical) span residues 43-63 (RAMAFNIIIQLGAILAVVWEF), 85-105 (LNLLIAFMPAVVLGVIFADTI), 109-129 (LFNAITVATALVVGGVIMLWA), 183-203 (AATEFSFFLAMPTMVGAAVYS), 218-238 (VFAIGFITSFVFAMIAVRALL), and 254-274 (IAFGLLILATWQFGWIDWASA).

It belongs to the UppP family.

It localises to the cell inner membrane. The enzyme catalyses di-trans,octa-cis-undecaprenyl diphosphate + H2O = di-trans,octa-cis-undecaprenyl phosphate + phosphate + H(+). Its function is as follows. Catalyzes the dephosphorylation of undecaprenyl diphosphate (UPP). Confers resistance to bacitracin. This Pseudomonas syringae pv. tomato (strain ATCC BAA-871 / DC3000) protein is Undecaprenyl-diphosphatase.